A 95-amino-acid chain; its full sequence is Large ribosomal subunit protein bL25 (95 aa).

It belongs to the bacterial ribosomal protein bL25 family. As to quaternary structure, part of the 50S ribosomal subunit; part of the 5S rRNA/L5/L18/L25 subcomplex. Contacts the 5S rRNA. Binds to the 5S rRNA independently of L5 and L18.

Its function is as follows. This is one of the proteins that binds to the 5S RNA in the ribosome where it forms part of the central protuberance. In Shewanella loihica (strain ATCC BAA-1088 / PV-4), this protein is Large ribosomal subunit protein bL25.